The sequence spans 3898 residues: Genome polyprotein (3898 aa).

Residues 1-168 (MELNHFELLY…TNCPLWVTSC (168 aa)) form the Peptidase C53 domain. Active-site for N-terminal protease activity residues include glutamate 22, histidine 49, and cysteine 69. The disordered stretch occupies residues 32–54 (LFGNPSEVHPQSTLKLPHDRGRG). Positions 112–138 (CEVTKRIGRVTGSDGKLYHIYVCVDGC) are zinc-binding TRASH domain. The N-linked (GlcNAc...) asparagine; by host glycan is linked to asparagine 157. Disordered stretches follow at residues 170-206 (DDGA…KPPD) and 221-242 (KGKV…KPPE). Composition is skewed to basic and acidic residues over residues 176–185 (SKDKKPDRMN) and 192–204 (APRE…KTKP). 5 N-linked (GlcNAc...) asparagine; by host glycosylation sites follow: asparagine 269, asparagine 274, asparagine 278, asparagine 293, and asparagine 332. Disulfide bonds link cysteine 305–cysteine 349 and cysteine 335–cysteine 336. Asparagine 362 and asparagine 367 each carry an N-linked (GlcNAc...) asparagine; by host glycan. 2 disulfide bridges follow: cysteine 377-cysteine 422 and cysteine 381-cysteine 405. N-linked (GlcNAc...) asparagine; by host glycosylation is found at asparagine 410, asparagine 425, asparagine 500, and asparagine 594. Cysteine 693 and cysteine 737 are disulfide-bonded. N-linked (GlcNAc...) asparagine; by host glycans are attached at residues asparagine 805, asparagine 810, asparagine 874, asparagine 918, asparagine 949, and asparagine 986. 9 helical membrane-spanning segments follow: residues 1031–1051 (FVVL…LIVT), 1070–1090 (VVLI…YFLL), 1104–1124 (ILLL…VALL), 1140–1164 (QRQP…MLLA), 1189–1209 (FSTD…TYIS), 1217–1237 (WLQY…LKGI), 1247–1267 (LPSH…AVVT), 1281–1301 (VPTL…ILIL), and 1360–1380 (TMLP…WQLI). The Peptidase C74 domain occupies 1441–1589 (KELIIKHKVR…DLEHLGWVLR (149 aa)). Catalysis depends on for cysteine protease NS2 activity residues histidine 1447, glutamate 1461, and cysteine 1512. Residues 1568–1588 (MLLVGNLGTEIGDLEHLGWVL) form a helical membrane-spanning segment. Positions 1590-1763 (GPAVCKKVTE…LPIFEASSGR (174 aa)) constitute a Peptidase S31 domain. Active-site charge relay system; for serine protease NS3 activity residues include histidine 1658 and aspartate 1695. The N-linked (GlcNAc...) asparagine; by host glycan is linked to asparagine 1713. Catalysis depends on serine 1752, which acts as the Charge relay system; for serine protease NS3 activity. One can recognise a Helicase ATP-binding domain in the interval 1802-1960 (ITTMNRGEFR…QKHPIEEFIA (159 aa)). 1815–1822 (LATGAGKT) contributes to the ATP binding site. Residues 1910 to 1913 (DEYH) carry the DEAH box motif. The region spanning 1978-2179 (GLKIPVEEMK…ELPMAVKNIM (202 aa)) is the Helicase C-terminal domain. Asparagine 2134, asparagine 2217, asparagine 2494, asparagine 2787, asparagine 2815, asparagine 2891, asparagine 3211, and asparagine 3316 each carry an N-linked (GlcNAc...) asparagine; by host glycan. GTP is bound by residues threonine 3500 and leucine 3502. Residues 3519 to 3642 (PVAVSFDTKA…ITERALGEKF (124 aa)) enclose the RdRp catalytic domain. An N-linked (GlcNAc...) asparagine; by host glycan is attached at asparagine 3689. Arginine 3697 lines the GTP pocket. Asparagine 3698 carries N-linked (GlcNAc...) asparagine; by host glycosylation. Lysine 3705 is a binding site for GTP. Asparagine 3794 carries an N-linked (GlcNAc...) asparagine; by host glycan.

This sequence belongs to the pestivirus polyprotein family. As to quaternary structure, interacts (via N-terminus) with host SP1; this interaction induces proteasomal degradation of SP1 with subsequent down-regulation of HDAC1 and ISG15 expression thereby counteracting the host innate immunity. Interacts (via C-terminus) with host IRF3. In terms of assembly, interacts with host OS9. Homodimer; disulfide-linked. Interacts with host RPSA. As to quaternary structure, homodimer; disulfide-linked. Heterodimer with E1; disulfide-linked. In terms of assembly, homodimer; disulfide-linked. Heterodimer with E1; disulfide-linked. Interacts with host TRX2. Interacts with host receptor ADAM17 (via metalloproteinase domain); this interaction allows binding and probably entry of the virus into the host cell. Interacts with host ANXA2; this interaction allows binding and probably entry of the virus into the host cell. Interacts with host MERTK; this interaction allows binding and probably entry of the virus into the host cell. Interacts with host TRAF6; this interaction inhibits host NF-kappa-B pathway. Interacts with NS5B; this interaction enhances RNA-dependent RNA polymerase activity. Interacts with protein NS4A. As to quaternary structure, interacts with host RAB5, this interaction facilitates the formation of NS4B-related complex. Interacts with host FTH1; this interaction plays a positive role in viral anti-apoptosis. In terms of assembly, interacts with RNA-directed RNA polymerase. Interacts with host RSAD2; this interaction inhibits viral replication. Interacts with NS5A; this interaction promotes viral replication. Post-translationally, heavily glycosylated. In terms of processing, the viral RNA of pestiviruses is expressed as a single polyprotein which undergoes post-translational proteolytic processing resulting in the production of at least eleven individual proteins. The N-terminal protease cleaves itself from the nascent polyprotein autocatalytically and thereby generates the N-terminus of the adjacent viral capsid protein C. Cleavage between E2 and p7 is partial.

It is found in the host cytoplasm. The protein resides in the virion. Its subcellular location is the host cell membrane. The protein localises to the virion membrane. It localises to the host cell surface. It is found in the host membrane. It carries out the reaction Leu is conserved at position P1 for all four cleavage sites. Alanine is found at position P1' of the NS4A-NS4B cleavage site, whereas serine is found at position P1' of the NS3-NS4A, NS4B-NS5A and NS5A-NS5B cleavage sites.. The catalysed reaction is RNA(n) + a ribonucleoside 5'-triphosphate = RNA(n+1) + diphosphate. It catalyses the reaction a ribonucleoside 5'-triphosphate + H2O = a ribonucleoside 5'-diphosphate + phosphate + H(+). The enzyme catalyses ATP + H2O = ADP + phosphate + H(+). Functionally, leader cysteine autoprotease that cleaves itself from the nascent polyprotein during translation of the viral mRNA. Once released, plays a role in the inhibition of host innate immune response by interacting with host IRF3 and inducing its proteasomal degradation. Packages viral RNA to form a viral nucleocapsid and thereby protects viral RNA. Also plays a role in transcription regulation. Protects the incoming virus against IFN-induced effectors. In terms of biological role, plays a role in viral entry. Interacts with host RPSA that acts as a cellular attachment receptor for the virus. Also possesses intrinsic ribonuclease (RNase) activity that can inhibit the production of type I interferon and assist in the development of persistent infections. Cleaves preferentially NpU bonds. Binds to heparan sulfate on the host cells for entry. Its function is as follows. Plays a role in cell attachment and subsequent fusion of viral and cellular membranes. Therefore, mediates together with envelope glycoprotein E2 the viral entry. Functionally, plays a role in cell attachment and subsequent fusion of viral and cellular membranes. Therefore, mediates together with envelope glycoprotein E1 the viral entry. Binds to host ADAM17 receptor for entry. Binds to host ANXA2 for entry. Binds to host MERTK for entry. Plays an essential role in the virus replication cycle by acting as a viroporin. Forms ion conductive pores, which alters the cell permeability allowing the transport of ions and other small molecules. In terms of biological role, autoprotease that associates with the host chaperone JIV and cleaves the NS2-3 protein between NS2 and NS3. Also plays a role in the formation of infectious particles. Its function is as follows. Plays a role in the regulation of viral RNA replication. Functionally, multifunctional protein that contains an N-terminal protease and a C-terminal helicase, playing essential roles in viral polyprotein processing and viral genome replication. The chymotrypsin-like serine protease activity utilizes NS4A as an essential cofactor and catalyzes the cleavage of the polyprotein leading to the release of NS4A, NS4B, NS5A, and NS5B. Plays a role in the inhibition of host NF-kappa-B activation by interacting with and inhibiting host TRAF6. Interacts with NS5B to enhance RNA-dependent RNA polymerase activity. Acts as a cofactor for the NS3 protease activity. In terms of biological role, induces a specific membrane alteration that serves as a scaffold for the virus replication complex. Antagonizes host cell apoptosis by interacting with host ferritin heavy chain. The ORF4 protein physically binds host FTH1/FHC, resulting in the reduction of FTH1 protein levels in host cells. Reduction of FTH1 concentration further inhibits the accumulation of reactive oxygen in host cells, leading to reduced apoptosis. Its function is as follows. Regulates viral RNA replication by interacting with the 3'-untranslated region of viral RNA in a dose-dependent manner. At small concentrations promotes viral synthesis by interacting with the polymerase NS5B while at large concentrations, inhibits replication. Functionally, replicates the viral (+) and (-) genome. The sequence is that of Genome polyprotein from Classical swine fever virus (strain Alfort/Tuebingen) (CSFV).